Reading from the N-terminus, the 128-residue chain is Ribonuclease P protein component (128 aa).

It belongs to the RnpA family. As to quaternary structure, consists of a catalytic RNA component (M1 or rnpB) and a protein subunit.

It carries out the reaction Endonucleolytic cleavage of RNA, removing 5'-extranucleotides from tRNA precursor.. Functionally, RNaseP catalyzes the removal of the 5'-leader sequence from pre-tRNA to produce the mature 5'-terminus. It can also cleave other RNA substrates such as 4.5S RNA. The protein component plays an auxiliary but essential role in vivo by binding to the 5'-leader sequence and broadening the substrate specificity of the ribozyme. The protein is Ribonuclease P protein component of Prochlorococcus marinus (strain MIT 9215).